We begin with the raw amino-acid sequence, 990 residues long: Storkhead-box protein 1 (990 aa).

Over residues 396 to 408 the composition is skewed to basic and acidic residues; sequence TTRHKDSSKEVIG. Disordered stretches follow at residues 396 to 471, 562 to 586, 712 to 736, and 809 to 832; these read TTRH…VHHL, VAKA…PRRV, GLSD…DGGC, and LFSN…SRIP. The span at 416–431 shows a compositional bias: basic residues; the sequence is KSRRRGSSHKGRHKAR. Residues 809–830 show a composition bias toward polar residues; that stretch reads LFSNAGESPNPDLSDNPGQNSR.

In terms of tissue distribution, detected in sensory epithelial cells of the inner ear but not in adjacent surrounding tissue (at protein level).

The protein resides in the nucleus. The protein localises to the cytoplasm. Its subcellular location is the cytoskeleton. It localises to the microtubule organizing center. It is found in the centrosome. Its function is as follows. Involved in regulating the levels of reactive oxidative species and reactive nitrogen species and in mitochondrial homeostasis in the placenta. Required for regulation of inner ear epithelial cell proliferation via the AKT signaling pathway. Involved in cell cycle regulation by binding to the CCNB1 promoter, up-regulating its expression and promoting mitotic entry. Induces phosphorylation of MAPT/tau. This Mus musculus (Mouse) protein is Storkhead-box protein 1.